Here is a 622-residue protein sequence, read N- to C-terminus: Histone-lysine N-methyltransferase set9 (622 aa).

The region spanning 120–234 (SPFEITTTNR…IGEEITVSYG (115 aa)) is the SET domain. Disordered stretches follow at residues 262–314 (VPSE…GKFV), 335–394 (QPAG…TTAT), 427–470 (PTTS…RGKP), and 576–622 (DRGV…RMTM). Over residues 265–285 (EPQSKASTPALNDDTLSTDSH) the composition is skewed to polar residues. Over residues 376 to 394 (PPSTAANESERSSTSTTAT) the composition is skewed to low complexity. 2 stretches are compositionally biased toward polar residues: residues 427–437 (PTTSLRSGSTE) and 446–458 (DQPSTLKQGSIGS). The segment covering 590 to 607 (SEPRTETEGSEGCEDRRT) has biased composition (basic and acidic residues). Over residues 608–622 (TRASRRRTRSLRMTM) the composition is skewed to basic residues.

The protein belongs to the class V-like SAM-binding methyltransferase superfamily. Histone-lysine methyltransferase family. Suvar4-20 subfamily.

The protein localises to the nucleus. It is found in the chromosome. The catalysed reaction is L-lysyl(20)-[histone H4] + 3 S-adenosyl-L-methionine = N(6),N(6),N(6)-trimethyl-L-lysyl(20)-[histone H4] + 3 S-adenosyl-L-homocysteine + 3 H(+). Its function is as follows. Histone methyltransferase that trimethylates 'Lys-20' of histone H4 to form H4K20me3. In Aspergillus fumigatus (strain ATCC MYA-4609 / CBS 101355 / FGSC A1100 / Af293) (Neosartorya fumigata), this protein is Histone-lysine N-methyltransferase set9 (set9).